The following is a 643-amino-acid chain: Threonine--tRNA ligase (643 aa).

Residues 3-64 (DMINITFPDG…QEDGAVEIIT (62 aa)) form the TGS domain. Positions 245 to 542 (DHRKLGKELK…LIEEHKGALP (298 aa)) are catalytic. Residues cysteine 338, histidine 389, and histidine 519 each coordinate Zn(2+).

Belongs to the class-II aminoacyl-tRNA synthetase family. As to quaternary structure, homodimer. Zn(2+) is required as a cofactor.

The protein localises to the cytoplasm. The enzyme catalyses tRNA(Thr) + L-threonine + ATP = L-threonyl-tRNA(Thr) + AMP + diphosphate + H(+). Functionally, catalyzes the attachment of threonine to tRNA(Thr) in a two-step reaction: L-threonine is first activated by ATP to form Thr-AMP and then transferred to the acceptor end of tRNA(Thr). Also edits incorrectly charged L-seryl-tRNA(Thr). This is Threonine--tRNA ligase from Bacillus velezensis (strain DSM 23117 / BGSC 10A6 / LMG 26770 / FZB42) (Bacillus amyloliquefaciens subsp. plantarum).